A 126-amino-acid polypeptide reads, in one-letter code: Holo-[acyl-carrier-protein] synthase (126 aa).

Residues Asp9 and Glu58 each coordinate Mg(2+).

It belongs to the P-Pant transferase superfamily. AcpS family. Mg(2+) serves as cofactor.

It localises to the cytoplasm. It carries out the reaction apo-[ACP] + CoA = holo-[ACP] + adenosine 3',5'-bisphosphate + H(+). Transfers the 4'-phosphopantetheine moiety from coenzyme A to a Ser of acyl-carrier-protein. In Escherichia coli O139:H28 (strain E24377A / ETEC), this protein is Holo-[acyl-carrier-protein] synthase.